The following is a 162-amino-acid chain: Class I hydrophobin 3 (162 aa).

2 disulfide bridges follow: C36–C150 and C151–C159.

It belongs to the fungal hydrophobin family. Self-assembles to form functional amyloid fibrils called rodlets. Self-assembly into fibrillar rodlets occurs spontaneously at hydrophobic:hydrophilic interfaces and the rodlets further associate laterally to form amphipathic monolayers.

The protein localises to the secreted. It is found in the cell wall. Aerial growth, conidiation, and dispersal of filamentous fungi in the environment rely upon a capability of their secreting small amphipathic proteins called hydrophobins (HPBs) with low sequence identity. Class I can self-assemble into an outermost layer of rodlet bundles on aerial cell surfaces, conferring cellular hydrophobicity that supports fungal growth, development and dispersal; whereas Class II form highly ordered films at water-air interfaces through intermolecular interactions but contribute nothing to the rodlet structure. The polypeptide is Class I hydrophobin 3 (Coprinopsis cinerea (strain Okayama-7 / 130 / ATCC MYA-4618 / FGSC 9003) (Inky cap fungus)).